The chain runs to 211 residues: Ribosomal RNA large subunit methyltransferase E (211 aa).

The S-adenosyl-L-methionine site is built by Gly60, Trp62, Asp85, Asp101, and Asp126. The active-site Proton acceptor is Lys166.

The protein belongs to the class I-like SAM-binding methyltransferase superfamily. RNA methyltransferase RlmE family.

The protein resides in the cytoplasm. The catalysed reaction is uridine(2552) in 23S rRNA + S-adenosyl-L-methionine = 2'-O-methyluridine(2552) in 23S rRNA + S-adenosyl-L-homocysteine + H(+). In terms of biological role, specifically methylates the uridine in position 2552 of 23S rRNA at the 2'-O position of the ribose in the fully assembled 50S ribosomal subunit. The polypeptide is Ribosomal RNA large subunit methyltransferase E (Bordetella petrii (strain ATCC BAA-461 / DSM 12804 / CCUG 43448)).